Reading from the N-terminus, the 269-residue chain is Indole-3-glycerol phosphate synthase (269 aa).

This sequence belongs to the TrpC family.

The enzyme catalyses 1-(2-carboxyphenylamino)-1-deoxy-D-ribulose 5-phosphate + H(+) = (1S,2R)-1-C-(indol-3-yl)glycerol 3-phosphate + CO2 + H2O. It participates in amino-acid biosynthesis; L-tryptophan biosynthesis; L-tryptophan from chorismate: step 4/5. This is Indole-3-glycerol phosphate synthase from Rhodococcus jostii (strain RHA1).